Reading from the N-terminus, the 554-residue chain is Myo-inositol transporter 1 (554 aa).

The span at M1–T13 shows a compositional bias: polar residues. Positions M1–E57 are disordered. 2 N-linked (GlcNAc...) asparagine glycosylation sites follow: N6 and N22. Over residues S15–S34 the composition is skewed to low complexity. Polar residues predominate over residues N44–E57. The next 6 helical transmembrane spans lie at M65–G85, F110–A130, I144–A164, F167–L187, L196–W216, and V227–P247. A glycan (N-linked (GlcNAc...) asparagine) is linked at N279. The helical transmembrane segment at G313–G332 threads the bilayer. N351 carries N-linked (GlcNAc...) asparagine glycosylation. A run of 5 helical transmembrane segments spans residues A354 to I374, I382 to H402, G420 to I440, I459 to F479, and G490 to L510.

Belongs to the major facilitator superfamily. Sugar transporter (TC 2.A.1.1) family.

It is found in the cell membrane. It catalyses the reaction myo-inositol(out) + H(+)(out) = myo-inositol(in) + H(+)(in). Major transporter for myo-inositol. The polypeptide is Myo-inositol transporter 1 (Candida albicans (strain SC5314 / ATCC MYA-2876) (Yeast)).